We begin with the raw amino-acid sequence, 458 residues long: NALCN channel auxiliary factor 1 (458 aa).

The chain crosses the membrane as a helical span at residues 40 to 60 (LSLASLLFFTVLLSDHLWFCA). A disordered region spans residues 70–155 (KEHQQQQRQQ…NRGKDDRGKA (86 aa)). A compositionally biased stretch (low complexity) spans 75–96 (QQRQQQQQQQQQRQRQQQQQQR). A compositionally biased stretch (gly residues) spans 136-145 (GDGGGGGGKG). 7 disulfides stabilise this stretch: Cys191–Cys261, Cys226–Cys313, Cys246–Cys261, Cys304–Cys341, Cys324–Cys377, Cys330–Cys376, and Cys334–Cys361. An N-linked (GlcNAc...) asparagine glycan is attached at Asn217. The helical transmembrane segment at 417-437 (LKLCVLVLILLHTVLTASAAQ) threads the bilayer.

Belongs to the NALF family. Component of the NALCN channel complex. NALCN complex consists of NALCN and auxiliary subunits, UNC79, UNC80 and NACL1. These auxiliary subunits are essential for the NALCN channel function.

It localises to the cell membrane. In terms of biological role, auxillary component of the NALCN sodium channel complex, a channel that regulates the resting membrane potential and controls neuronal excitability. This Homo sapiens (Human) protein is NALCN channel auxiliary factor 1.